Reading from the N-terminus, the 371-residue chain is Ligninase LG5 (371 aa).

An N-terminal signal peptide occupies residues 1-21 (MAFKKLLAVLTAALSLRAAQG). Positions 22-27 (AAVEKR) are excised as a propeptide. Intrachain disulfides connect Cys30/Cys42, Cys41/Cys311, Cys61/Cys146, and Cys275/Cys344. The Proton acceptor role is filled by His74. Asp75, Gly92, Asp94, and Ser96 together coordinate Ca(2+). Heme b is bound at residue His202. Ca(2+) contacts are provided by Ser203, Asp220, Thr222, Ile225, and Asp227. Asn283 carries N-linked (GlcNAc...) asparagine glycosylation. Positions 349–371 (FPTLSTLPGPATSVARIPPPPGA) are disordered.

Belongs to the peroxidase family. Ligninase subfamily. Requires Ca(2+) as cofactor. It depends on heme b as a cofactor.

It carries out the reaction 1-(3,4-dimethoxyphenyl)-2-(2-methoxyphenoxy)propane-1,3-diol + H2O2 = 3,4-dimethoxybenzaldehyde + guaiacol + glycolaldehyde + H2O. The catalysed reaction is 2 (3,4-dimethoxyphenyl)methanol + H2O2 = 2 (3,4-dimethoxyphenyl)methanol radical + 2 H2O. It participates in secondary metabolite metabolism; lignin degradation. In terms of biological role, depolymerization of lignin. Catalyzes the C(alpha)-C(beta) cleavage of the propyl side chains of lignin. This is Ligninase LG5 (GLG5) from Phanerodontia chrysosporium (White-rot fungus).